A 303-amino-acid polypeptide reads, in one-letter code: MLDEYKLTHLKQLEAESIHIIREVAAEFDNPVMLYSIGKDSAVMLHLAMKAFAPGKPPFPLMHVDTTWKFKEMIEFRDKYVKELGLELIVHSNQEGIDMGISPFVHGSAKHTDIMKTQALKQALDKHGFDAAFGGARRDEEKSRAKERVYSFRDKKHRWDPKNQRPELWNIYNSRVDKGESIRVFPLSNWTELDIWQYIHLESIPLVPLYFAAKRPVVERDGTLIMVDDDRMPIEPGEKVEEKMVRFRTLGCYPLTGAVESEATTLPEIIQEMLLTTTSERQGRVIDHDSSGSMEKKKQEGYF.

The disordered stretch occupies residues Arg281–Phe303.

This sequence belongs to the PAPS reductase family. CysD subfamily. In terms of assembly, heterodimer composed of CysD, the smaller subunit, and CysN.

It catalyses the reaction sulfate + ATP + H(+) = adenosine 5'-phosphosulfate + diphosphate. It participates in sulfur metabolism; hydrogen sulfide biosynthesis; sulfite from sulfate: step 1/3. Functionally, with CysN forms the ATP sulfurylase (ATPS) that catalyzes the adenylation of sulfate producing adenosine 5'-phosphosulfate (APS) and diphosphate, the first enzymatic step in sulfur assimilation pathway. APS synthesis involves the formation of a high-energy phosphoric-sulfuric acid anhydride bond driven by GTP hydrolysis by CysN coupled to ATP hydrolysis by CysD. This Saccharophagus degradans (strain 2-40 / ATCC 43961 / DSM 17024) protein is Sulfate adenylyltransferase subunit 2.